The sequence spans 589 residues: MAIKRGADLIVEALEEYGTEQVVGFIGHTSHFVADAFSKSHLGKRVINPATELGGAWMVNGYNYVKDRSAAVGAWHCVGNLLLHAAMQEARTGRIPAVHIGLNSDGRLAGRSEAAQQVPWQSFTPIARSTQRVERLDKVGEAIHEAFRVAEGHPAGPAYVDIPFDLTADQIDDKALVPRGATRAKSVLHAPNEDVREAAAQLVAAKNPVILAGGGVARSGGSEALLKLAEMVGVPVVTTSTGAGVFPETHALAMGSAGFCGWKSANDMMAAADFVLVLGSRLSDWGIAQGYITKMPKFVHVDTDPAVLGTFYFPLLSVVADAKTFMEQLIEVLPGTSGFKAVRYQERENFRQATEFRAAWDGWVREQESGDGMPASMFRAMAEVRKVQRPEDIIVTDIGNHTLPMFGGAILQRPRRLVTSMAEGILGCGFPMALGAQLAEPNSRVFLGTGDGALYYHFNEFRVAVEHKLPVITMVFTNESYGANWTLMNHQFGQNNWTEFMNPDWVGIAKAFGAYGESVRETGDIAGALQRAIDSGKPALIEIPVSKTQGLASDPVGGVGPNLLLKGREIPVDTGGSMYPGENLLHLKS.

Residue E52 coordinates thiamine diphosphate. The interval 400–480 (NHTLPMFGGA…VITMVFTNES (81 aa)) is thiamine pyrophosphate binding. The Mg(2+) site is built by D451 and N478.

Belongs to the TPP enzyme family. In terms of assembly, homodimer. Requires Mg(2+) as cofactor. The cofactor is thiamine diphosphate. It depends on FAD as a cofactor.

It carries out the reaction cyclohexan-1,2-dione + H2O = 6-oxohexanoate + H(+). In terms of biological role, catalyzes the ring-opening cleavage of the alicyclic alcohol cyclohexane-1,2-dione. In Azoarcus sp, this protein is Cyclohexane-1,2-dione hydrolase.